The primary structure comprises 338 residues: Aspartate carbamoyltransferase catalytic subunit (338 aa).

Residues Arg59 and Thr60 each coordinate carbamoyl phosphate. Lys87 provides a ligand contact to L-aspartate. Carbamoyl phosphate contacts are provided by Arg109, His142, and Gln145. Arg182 and Arg253 together coordinate L-aspartate. Residues Gly294 and Pro295 each contribute to the carbamoyl phosphate site.

This sequence belongs to the aspartate/ornithine carbamoyltransferase superfamily. ATCase family. In terms of assembly, heterododecamer (2C3:3R2) of six catalytic PyrB chains organized as two trimers (C3), and six regulatory PyrI chains organized as three dimers (R2).

It catalyses the reaction carbamoyl phosphate + L-aspartate = N-carbamoyl-L-aspartate + phosphate + H(+). It participates in pyrimidine metabolism; UMP biosynthesis via de novo pathway; (S)-dihydroorotate from bicarbonate: step 2/3. Functionally, catalyzes the condensation of carbamoyl phosphate and aspartate to form carbamoyl aspartate and inorganic phosphate, the committed step in the de novo pyrimidine nucleotide biosynthesis pathway. This chain is Aspartate carbamoyltransferase catalytic subunit, found in Prochlorococcus marinus (strain MIT 9301).